The following is a 724-amino-acid chain: Probable methyltransferase PMT28 (724 aa).

Residues 1 to 22 (MMERKREMGIAYFARRIKQPRG) are Cytoplasmic-facing. A helical; Signal-anchor for type II membrane protein transmembrane segment spans residues 23–43 (IWVKMTFIVVLGLCFVFFWSF). Residues 44-724 (LSSSASTFNV…LCAQKTLWRP (681 aa)) are Lumenal-facing. Positions 63–211 (EPVSSRTKSA…ISKKRKRKGP (149 aa)) are disordered. The span at 71–98 (SAHEVSESSKLHERGKVESGSKSKEGKK) shows a compositional bias: basic and acidic residues. The span at 107–125 (HETKKKKEHAVSHPHKKKD) shows a compositional bias: basic residues. The segment covering 126-140 (VPKPVVEEVVVKEDQ) has biased composition (basic and acidic residues). Residues 141–173 (EHEEAESDDSDQSNKEDGEEGTESDGNEGESDG) are compositionally biased toward acidic residues. N-linked (GlcNAc...) asparagine glycosylation is found at Asn-305, Asn-316, and Asn-568.

This sequence belongs to the methyltransferase superfamily.

The protein resides in the golgi apparatus membrane. This is Probable methyltransferase PMT28 from Arabidopsis thaliana (Mouse-ear cress).